A 644-amino-acid chain; its full sequence is 1-deoxy-D-xylulose-5-phosphate synthase (644 aa).

Thiamine diphosphate is bound by residues H72 and 113 to 115; that span reads GHA. D144 contributes to the Mg(2+) binding site. Thiamine diphosphate-binding positions include 145 to 146, N174, Y287, and E370; that span reads GA. N174 contributes to the Mg(2+) binding site.

It belongs to the transketolase family. DXPS subfamily. Homodimer. The cofactor is Mg(2+). Requires thiamine diphosphate as cofactor.

It catalyses the reaction D-glyceraldehyde 3-phosphate + pyruvate + H(+) = 1-deoxy-D-xylulose 5-phosphate + CO2. The protein operates within metabolic intermediate biosynthesis; 1-deoxy-D-xylulose 5-phosphate biosynthesis; 1-deoxy-D-xylulose 5-phosphate from D-glyceraldehyde 3-phosphate and pyruvate: step 1/1. Functionally, catalyzes the acyloin condensation reaction between C atoms 2 and 3 of pyruvate and glyceraldehyde 3-phosphate to yield 1-deoxy-D-xylulose-5-phosphate (DXP). In Prochlorococcus marinus (strain MIT 9303), this protein is 1-deoxy-D-xylulose-5-phosphate synthase.